A 125-amino-acid chain; its full sequence is Glycine cleavage system H protein (125 aa).

The Lipoyl-binding domain maps to 19–101 (EVTVGITDHA…YHEGWLVKLK (83 aa)). Position 60 is an N6-lipoyllysine (K60).

This sequence belongs to the GcvH family. As to quaternary structure, the glycine cleavage system is composed of four proteins: P, T, L and H. (R)-lipoate is required as a cofactor.

Its function is as follows. The glycine cleavage system catalyzes the degradation of glycine. The H protein shuttles the methylamine group of glycine from the P protein to the T protein. The sequence is that of Glycine cleavage system H protein from Legionella pneumophila (strain Corby).